Reading from the N-terminus, the 314-residue chain is Inosine-uridine preferring nucleoside hydrolase (314 aa).

A Ca(2+)-binding site is contributed by aspartate 10. Aspartate 14 is a binding site for substrate. Residues aspartate 15 and threonine 126 each contribute to the Ca(2+) site. The substrate site is built by asparagine 160, glutamate 166, and asparagine 168. Catalysis depends on histidine 240, which acts as the Proton donor. Aspartate 241 provides a ligand contact to Ca(2+).

This sequence belongs to the IUNH family. As to quaternary structure, homotetramer. The cofactor is Ca(2+).

The enzyme catalyses inosine + H2O = hypoxanthine + D-ribose. It catalyses the reaction uridine + H2O = D-ribose + uracil. It functions in the pathway purine metabolism; purine nucleoside salvage. With respect to regulation, is potently inhibited by immucillin A and immucillin ACAP, which are transition state inhibitors. Catalyzes the hydrolysis of the N-glycosidic bond of all of the commonly occurring purine and pyrimidine nucleosides into ribose and the associated base, but has a preference for inosine and uridine as substrates. Likely functions in purine salvage from the host, a fundamental pathway since protozoan parasites such as L.major are incapable of de novo purine biosynthesis. In Leishmania major, this protein is Inosine-uridine preferring nucleoside hydrolase (NSNH).